The primary structure comprises 100 residues: uncharacterized protein (100 aa).

The N-terminal stretch at 1–18 is a signal peptide; that stretch reads MWGFLVLKARWLVTPVRT. The disordered stretch occupies residues 48 to 86; sequence LTRGVIRVSPQERSQQNQSAPKGPTPSTRPKPRTLGPQA. Residues 58–69 show a composition bias toward polar residues; the sequence is QERSQQNQSAPK. A glycan (N-linked (GlcNAc...) asparagine) is linked at Asn-64.

The protein localises to the secreted. This is an uncharacterized protein from Homo sapiens (Human).